The chain runs to 310 residues: UPF0324 membrane protein GSU2818 (310 aa).

9 consecutive transmembrane segments (helical) span residues F11–I33, M53–I72, I79–G97, S107–L129, T136–G158, A193–A215, I227–L244, L254–L273, and L286–W308.

The protein belongs to the UPF0324 family.

It localises to the cell membrane. This is UPF0324 membrane protein GSU2818 from Geobacter sulfurreducens (strain ATCC 51573 / DSM 12127 / PCA).